Here is a 431-residue protein sequence, read N- to C-terminus: Fumarylacetoacetase (431 aa).

A Ca(2+)-binding site is contributed by D133. Y135 provides a ligand contact to substrate. The active-site Proton acceptor is H140. R149 is a substrate binding site. Ca(2+) is bound by residues E209, E211, and D243. D243 provides a ligand contact to Mg(2+). Substrate contacts are provided by Q250 and Y254. The Mg(2+) site is built by K263 and T267. T362 contacts substrate.

The protein belongs to the FAH family. Ca(2+) is required as a cofactor. Requires Mg(2+) as cofactor.

The catalysed reaction is 4-fumarylacetoacetate + H2O = acetoacetate + fumarate + H(+). It functions in the pathway amino-acid degradation; L-phenylalanine degradation; acetoacetate and fumarate from L-phenylalanine: step 6/6. Its function is as follows. Use of phenylalanine and phenylacetate as a carbon source. The chain is Fumarylacetoacetase (fahA) from Emericella nidulans (strain FGSC A4 / ATCC 38163 / CBS 112.46 / NRRL 194 / M139) (Aspergillus nidulans).